A 458-amino-acid polypeptide reads, in one-letter code: Probable alpha-L-glutamate ligase (458 aa).

The segment at 1 to 162 is unknown; that stretch reads MSDNKFIIGS…YGVKSAKKSG (162 aa). Residues 163–458 are alpha-L-glutamate ligase; that stretch reads LKIGLLASNP…IEKKLGWKAE (296 aa). One can recognise an ATP-grasp domain in the interval 267–450; the sequence is LQLLQKNNLD…IAGAMIDSIE (184 aa). Residues Lys304, 341–342, Asp350, and 374–376 contribute to the ATP site; these read EF and RAN. 3 residues coordinate Mg(2+): Asp411, Glu423, and Asn425. The Mn(2+) site is built by Asp411, Glu423, and Asn425.

The protein in the C-terminal section; belongs to the RimK family. Mg(2+) is required as a cofactor. It depends on Mn(2+) as a cofactor.

This is Probable alpha-L-glutamate ligase from Shewanella halifaxensis (strain HAW-EB4).